A 327-amino-acid chain; its full sequence is Phenylalanine--tRNA ligase alpha subunit (327 aa).

Residue Glu-252 coordinates Mg(2+).

This sequence belongs to the class-II aminoacyl-tRNA synthetase family. Phe-tRNA synthetase alpha subunit type 1 subfamily. Tetramer of two alpha and two beta subunits. It depends on Mg(2+) as a cofactor.

It is found in the cytoplasm. It carries out the reaction tRNA(Phe) + L-phenylalanine + ATP = L-phenylalanyl-tRNA(Phe) + AMP + diphosphate + H(+). This is Phenylalanine--tRNA ligase alpha subunit from Hamiltonella defensa subsp. Acyrthosiphon pisum (strain 5AT).